The primary structure comprises 423 residues: Maltoporin 1 (423 aa).

A signal peptide spans 1 to 23 (MNTTLRALSVALAAALIAPSAFA).

Belongs to the porin LamB (TC 1.B.3) family. In terms of assembly, homotrimer formed of three 18-stranded antiparallel beta-barrels, containing three independent channels.

Its subcellular location is the cell outer membrane. The enzyme catalyses beta-maltose(in) = beta-maltose(out). Involved in the transport of maltose and maltodextrins. The polypeptide is Maltoporin 1 (Klebsiella pneumoniae subsp. pneumoniae (strain ATCC 700721 / MGH 78578)).